Reading from the N-terminus, the 677-residue chain is Methionine--tRNA ligase (677 aa).

Positions 15-25 (PYANGSIHLGH) match the 'HIGH' region motif. Zn(2+) contacts are provided by Cys-146, Cys-149, Cys-159, and Cys-162. Positions 333–337 (KMSKS) match the 'KMSKS' region motif. Lys-336 provides a ligand contact to ATP. In terms of domain architecture, tRNA-binding spans 575 to 677 (DFAKVDLRVA…DGAKPGQQVK (103 aa)).

This sequence belongs to the class-I aminoacyl-tRNA synthetase family. MetG type 1 subfamily. As to quaternary structure, homodimer. Zn(2+) serves as cofactor.

Its subcellular location is the cytoplasm. It catalyses the reaction tRNA(Met) + L-methionine + ATP = L-methionyl-tRNA(Met) + AMP + diphosphate. Is required not only for elongation of protein synthesis but also for the initiation of all mRNA translation through initiator tRNA(fMet) aminoacylation. In Klebsiella pneumoniae subsp. pneumoniae (strain ATCC 700721 / MGH 78578), this protein is Methionine--tRNA ligase.